A 292-amino-acid chain; its full sequence is 2-(5''-triphosphoribosyl)-3'-dephosphocoenzyme-A synthase (292 aa).

The protein belongs to the CitG/MdcB family.

It carries out the reaction 3'-dephospho-CoA + ATP = 2'-(5''-triphospho-alpha-D-ribosyl)-3'-dephospho-CoA + adenine. Functionally, catalyzes the formation of 2-(5''-triphosphoribosyl)-3'-dephosphocoenzyme-A, the precursor of the prosthetic group of the holo-acyl carrier protein (gamma chain) of citrate lyase, from ATP and dephospho-CoA. The sequence is that of 2-(5''-triphosphoribosyl)-3'-dephosphocoenzyme-A synthase from Escherichia coli (strain SMS-3-5 / SECEC).